A 284-amino-acid chain; its full sequence is Exported repetitive protein (284 aa).

A signal peptide spans 1-22; the sequence is MPNRRRRKLSTAMSAVAALAVA. At 23–252 the chain is on the extracellular side; that stretch reads SPCAYFLVYE…MPSIMQAVQN (230 aa). Residues 80–216 form a disordered region; the sequence is TGSGDASTGL…SPATTSTGGG (137 aa). The segment covering 86 to 110 has biased composition (low complexity); that stretch reads STGLTGPGLTSPGLTSPGLTSPGLT. Repeat copies occupy residues 92–96, 97–101, 102–106, 107–111, 112–116, 117–121, 144–148, 149–153, 154–158, 159–163, 164–168, and 169–173. A 6 X 5 AA tandem repeats of P-[GA]-L-T-S region spans residues 92-121; sequence PGLTSPGLTSPGLTSPGLTDPALTSPGLTP. The interval 144 to 173 is 6 X 5 AA approximate tandem repeats of P-[ATG]-[LG]-X-X; it reads PALTNPALTSPTGATPGLTSPTGLDPALGG. Over residues 145–165 the composition is skewed to polar residues; that stretch reads ALTNPALTSPTGATPGLTSPT. Residues 202-212 are compositionally biased toward low complexity; that stretch reads GTIPSSPATTS. The chain crosses the membrane as a helical span at residues 253-273; that stretch reads GGAAAPAASPPVPPIPAAAAV. At 274 to 284 the chain is on the cytoplasmic side; sequence PPTDPITVPVA.

To M.leprae 28 kDa antigen.

The protein localises to the cell membrane. Surface-exposed protein required for multiplication and intracellular growth. The chain is Exported repetitive protein (erp) from Mycobacterium bovis (strain ATCC BAA-935 / AF2122/97).